Here is a 394-residue protein sequence, read N- to C-terminus: Exodeoxyribonuclease 7 large subunit (394 aa).

This sequence belongs to the XseA family. As to quaternary structure, heterooligomer composed of large and small subunits.

The protein resides in the cytoplasm. It carries out the reaction Exonucleolytic cleavage in either 5'- to 3'- or 3'- to 5'-direction to yield nucleoside 5'-phosphates.. Bidirectionally degrades single-stranded DNA into large acid-insoluble oligonucleotides, which are then degraded further into small acid-soluble oligonucleotides. The polypeptide is Exodeoxyribonuclease 7 large subunit (Thermotoga sp. (strain RQ2)).